Consider the following 569-residue polypeptide: Hemin/hemoglobin-binding protein 2 (569 aa).

A signal peptide spans 1–28; sequence MKKLWKKGLVAFLALTLIFQLIPGFASA. 3 NEAT domains span residues 34–173, 184–307, and 360–484; these read KDGG…FKVI, LSDG…ATAA, and LNNH…IKDI. Residues 204-205, Tyr-280, and Tyr-289 contribute to the heme site; that span reads SS. The tract at residues 307-357 is disordered; the sequence is ASSYPGSDETPPVVNPGETNPPVTKPDPGTTNPPVTTPPTTPSKPAVVDPK. Positions 502–511 are enriched in polar residues; that stretch reads TGNVASNNNA. The disordered stretch occupies residues 502–537; the sequence is TGNVASNNNAGPKLAKPDFDDTNSVQKTASKTEKNA. Positions 536–540 match the NXZTN sorting signal motif; the sequence is NAKTN. Pentaglycyl murein peptidoglycan amidated threonine is present on Thr-539. Positions 540–569 are cleaved as a propeptide — removed by sortase B; sequence NDSSSMVWYITLFGASFLYLAYRLKRKRLS.

The protein resides in the cell surface. It localises to the secreted. The protein localises to the cell wall. Its activity is regulated as follows. Is overexpressed in mecA, clpC and clpP mutants, suggesting the protein level is controlled by MecA, ClpC and ClpP (at protein level). In terms of biological role, acts as an extracellular and cell wall-bound hemophore; scavenges host heme and hemoglobin from the environment and also serves as a cell wall receptor for both. At low hemin (Hn) and hemoglobin (Hb) concentrations adsorbs Hn/Hb and presumably directs it to membrane transporters. Soluble Hbp2 can probably pass Hn/Hb to cell wall-anchored Hbp2, and both forms can accept Hn/Hb from Hbp1. May be involved in crossing the digestive barrier in infected animals. Binds host hemin. Binds host hemoglobin with affinity in the nanomolar range. The chain is Hemin/hemoglobin-binding protein 2 from Listeria monocytogenes serovar 1/2a (strain ATCC BAA-679 / EGD-e).